A 237-amino-acid chain; its full sequence is MLGFDLGRTGYEDAFTLQKQVQAMVQSGGDDILLLLEHPPTVSIGKNSGAENVPPHLQDMWNGHVDIVHSTRGGNVTCHFPGQLVAYPVISLKKRSGGIRAYVHDLEEAAIRMLARFGVTAARRQGFPGVWTGERKIASLGIAVSRYVTMHGMALNVAEDLSLFNIISPCGLEGVAATSIARETAGPVPDMPAVKTAFLEEFYHIFQPAGDHAQPLPTLRTTQDLMTLLQDAQRTEK.

The BPL/LPL catalytic domain occupies 27–210 (SGGDDILLLL…EFYHIFQPAG (184 aa)). Residues 72-79 (RGGNVTCH), 139-141 (SLG), and 152-154 (GMA) each bind substrate. Cys170 acts as the Acyl-thioester intermediate in catalysis.

The protein belongs to the LipB family.

It is found in the cytoplasm. The catalysed reaction is octanoyl-[ACP] + L-lysyl-[protein] = N(6)-octanoyl-L-lysyl-[protein] + holo-[ACP] + H(+). The protein operates within protein modification; protein lipoylation via endogenous pathway; protein N(6)-(lipoyl)lysine from octanoyl-[acyl-carrier-protein]: step 1/2. Its function is as follows. Catalyzes the transfer of endogenously produced octanoic acid from octanoyl-acyl-carrier-protein onto the lipoyl domains of lipoate-dependent enzymes. Lipoyl-ACP can also act as a substrate although octanoyl-ACP is likely to be the physiological substrate. This chain is Octanoyltransferase, found in Desulfovibrio desulfuricans (strain ATCC 27774 / DSM 6949 / MB).